A 20-amino-acid chain; its full sequence is Non-secretory ribonuclease (20 aa).

His16 acts as the Proton acceptor in catalysis.

The protein belongs to the pancreatic ribonuclease family. Interacts with and forms a tight 1:1 complex with RNH1. Dimerization of two such complexes may occur.

The protein resides in the lysosome. Its subcellular location is the cytoplasmic granule. The catalysed reaction is an [RNA] containing cytidine + H2O = an [RNA]-3'-cytidine-3'-phosphate + a 5'-hydroxy-ribonucleotide-3'-[RNA].. The enzyme catalyses an [RNA] containing uridine + H2O = an [RNA]-3'-uridine-3'-phosphate + a 5'-hydroxy-ribonucleotide-3'-[RNA].. Functionally, this is a non-secretory ribonuclease. It is a pyrimidine specific nuclease with a slight preference for U. Cytotoxin and helminthotoxin. Possesses a wide variety of biological activities. The protein is Non-secretory ribonuclease (RNASE2) of Sus scrofa (Pig).